The sequence spans 326 residues: Protein MICROTUBULE BINDING PROTEIN 2C (326 aa).

Polar residues-rich tracts occupy residues 1-15 (MYEQQQHFMDLQSDS) and 34-46 (PHQSAAGTNSGNE). Disordered regions lie at residues 1-46 (MYEQ…SGNE) and 71-132 (ERSS…KALA). A coiled-coil region spans residues 132-183 (AGAEKEEMSRLREQVNDLQTKLSEKEEVLKSMEMSKNQVNEIQEKLEATNRL).

Belongs to the microtubule binding protein 2C family. In terms of assembly, interacts with STM. As to expression, expressed in seedlings, roots, flowers and developing ovules.

Its subcellular location is the cytoplasm. The protein localises to the cytoskeleton. Functionally, prevents homeodomain proteins (e.g. STM) association to plasmodesmata and, consequently, cell-to-cell transport. Binds to RNA. Alters STM RNA binding capacity. Regulates cytoskeleton (e.g. actin) organization that determinates cell shape. Regulates stomata patterning and drought tolerance. Involved in restricting tobamovirus (e.g. oilseed rape mosaic virus) infectivity, probably by interfering with cell-to-cell virus movement. The protein is Protein MICROTUBULE BINDING PROTEIN 2C of Arabidopsis thaliana (Mouse-ear cress).